A 548-amino-acid chain; its full sequence is mRNA cleavage and polyadenylation factor CLP1 (548 aa).

ATP-binding positions include E19, K60, and 123–128; that span reads SSGKTT. Basic and acidic residues predominate over residues 437 to 481; that stretch reads ESEVKEEVKEEKNEKDGEIKQDGEGEKKGEGKGEGEGEGEGKYGE. The tract at residues 437-500 is disordered; it reads ESEVKEEVKE…DEEEVPFREE (64 aa). Acidic residues predominate over residues 482–494; that stretch reads EEGEAEGEDDEEE.

It belongs to the Clp1 family. Clp1 subfamily. Component of a pre-mRNA cleavage factor complex. Interacts directly with PCF11.

It is found in the nucleus. In terms of biological role, required for endonucleolytic cleavage during polyadenylation-dependent pre-mRNA 3'-end formation. The protein is mRNA cleavage and polyadenylation factor CLP1 of Cryptococcus neoformans var. neoformans serotype D (strain B-3501A) (Filobasidiella neoformans).